The primary structure comprises 134 residues: D-ribose pyranase (134 aa).

H20 serves as the catalytic Proton donor. Substrate-binding positions include D28, H101, and 123-125 (YSN).

It belongs to the RbsD / FucU family. RbsD subfamily. Homodecamer.

It localises to the cytoplasm. It carries out the reaction beta-D-ribopyranose = beta-D-ribofuranose. It functions in the pathway carbohydrate metabolism; D-ribose degradation; D-ribose 5-phosphate from beta-D-ribopyranose: step 1/2. Catalyzes the interconversion of beta-pyran and beta-furan forms of D-ribose. The sequence is that of D-ribose pyranase from Pseudomonas syringae pv. syringae (strain B728a).